The chain runs to 877 residues: Alanine--tRNA ligase (877 aa).

His563, His567, Cys665, and His669 together coordinate Zn(2+).

Belongs to the class-II aminoacyl-tRNA synthetase family. Zn(2+) serves as cofactor.

It is found in the cytoplasm. The catalysed reaction is tRNA(Ala) + L-alanine + ATP = L-alanyl-tRNA(Ala) + AMP + diphosphate. In terms of biological role, catalyzes the attachment of alanine to tRNA(Ala) in a two-step reaction: alanine is first activated by ATP to form Ala-AMP and then transferred to the acceptor end of tRNA(Ala). Also edits incorrectly charged Ser-tRNA(Ala) and Gly-tRNA(Ala) via its editing domain. The sequence is that of Alanine--tRNA ligase from Thermoanaerobacter pseudethanolicus (strain ATCC 33223 / 39E) (Clostridium thermohydrosulfuricum).